We begin with the raw amino-acid sequence, 35 residues long: uncharacterized protein (35 aa).

This is an uncharacterized protein from Haloarcula hispanica (His1V).